Consider the following 213-residue polypeptide: Ras-related protein RabK1 (213 aa).

14-21 (GDRMVGKL) is a binding site for GTP. Residues 36-43 (GNSIPFDF) carry the Effector region motif. GTP-binding positions include 61-65 (NTHGS) and 119-122 (TKSD).

Belongs to the small GTPase superfamily. Rab family.

In Dictyostelium discoideum (Social amoeba), this protein is Ras-related protein RabK1 (rabK1).